The sequence spans 429 residues: Glucose-6-phosphate isomerase (429 aa).

The active-site Proton donor is glutamate 282. Active-site residues include histidine 303 and lysine 418.

This sequence belongs to the GPI family.

It is found in the cytoplasm. The catalysed reaction is alpha-D-glucose 6-phosphate = beta-D-fructose 6-phosphate. The protein operates within carbohydrate biosynthesis; gluconeogenesis. It functions in the pathway carbohydrate degradation; glycolysis; D-glyceraldehyde 3-phosphate and glycerone phosphate from D-glucose: step 2/4. In terms of biological role, catalyzes the reversible isomerization of glucose-6-phosphate to fructose-6-phosphate. The protein is Glucose-6-phosphate isomerase of Mesomycoplasma hyopneumoniae (strain 232) (Mycoplasma hyopneumoniae).